A 20-amino-acid chain; its full sequence is Alanine aminotransferase 1 (20 aa).

Lys-11 is subject to N6-(pyridoxal phosphate)lysine. Lys-11 is a glycosylation site (N-linked (Glc) (glycation) lysine; in vitro).

This sequence belongs to the class-I pyridoxal-phosphate-dependent aminotransferase family. Alanine aminotransferase subfamily. In terms of assembly, homodimer. Requires pyridoxal 5'-phosphate as cofactor. Glycation of Lys-11 inactivates the enzyme.

The protein resides in the cytoplasm. It catalyses the reaction L-alanine + 2-oxoglutarate = pyruvate + L-glutamate. It participates in amino-acid degradation; L-alanine degradation via transaminase pathway; pyruvate from L-alanine: step 1/1. Functionally, catalyzes the reversible transamination between alanine and 2-oxoglutarate to form pyruvate and glutamate. Participates in cellular nitrogen metabolism and also in liver gluconeogenesis starting with precursors transported from skeletal muscles. The polypeptide is Alanine aminotransferase 1 (GPT) (Sus scrofa (Pig)).